Reading from the N-terminus, the 20-residue chain is Cytochrome P450 3A5 (20 aa).

It belongs to the cytochrome P450 family. The cofactor is heme.

Its subcellular location is the endoplasmic reticulum membrane. It is found in the microsome membrane. The catalysed reaction is an organic molecule + reduced [NADPH--hemoprotein reductase] + O2 = an alcohol + oxidized [NADPH--hemoprotein reductase] + H2O + H(+). Functionally, 6-beta-testosterone hydroxylase. In Papio sp. (Baboon), this protein is Cytochrome P450 3A5.